We begin with the raw amino-acid sequence, 348 residues long: Spore development regulator vosA (348 aa).

Residues 46–244 (ALSPSSCFLS…SDQGVRLRLR (199 aa)) form the Velvet domain. The tract at residues 250–294 (MMSNKRSISGSGDLTSDQSQQQQQQQPLAKKRREDSVESANPSSL) is disordered. The segment covering 253–266 (NKRSISGSGDLTSD) has biased composition (polar residues). Positions 274-280 (QQPLAKK) match the Nuclear localization signal motif.

This sequence belongs to the velvet family. VosA subfamily. In terms of assembly, forms a heterodimeric complex with VEL2; the formation of the VEL2-VOS1 complex is light-dependent.

The protein resides in the nucleus. Component of the velB-VosA heterodimeric complex that plays a dual role in activating genes associated with spore maturation and repressing certain development-associated genes. The complex binds DNA through the DNA-binding domain of vosA that recognizes an 11-nucleotide consensus sequence 5'-CTGGCCGCGGC-3' consisting of two motifs in the promoters of key developmental regulatory genes. Regulates spore viability, trehalose accumulation, and tolerance to thermal and oxidative as well as ion stresses. Positively regulates conidial pigmentation and pathogenicity on barley. The protein is Spore development regulator vosA of Cochliobolus sativus (strain ND90Pr / ATCC 201652) (Common root rot and spot blotch fungus).